The chain runs to 109 residues: Putative small proline-rich protein 2J (109 aa).

5 tandem repeats follow at residues arginine 21–cysteine 29, glutamine 30–leucine 38, glutamine 39–cysteine 47, glutamine 48–leucine 56, and serine 57–leucine 65. Positions arginine 21–leucine 65 are 5 X 9 AA approximate tandem repeats. The interval alanine 76 to isoleucine 109 is disordered.

The protein belongs to the cornifin (SPRR) family. As to expression, not expressed in uterus.

It is found in the cytoplasm. In terms of biological role, cross-linked envelope protein of keratinocytes. It is a keratinocyte protein that first appears in the cell cytosol, but ultimately becomes cross-linked to membrane proteins by transglutaminase. All that results in the formation of an insoluble envelope beneath the plasma membrane. This is Putative small proline-rich protein 2J (Sprr2j) from Mus musculus (Mouse).